The sequence spans 591 residues: MVVKDNLRTPIVCVMGHVDHGKTSLLDMIRGSAVVSGEAGAITQHIGATEVPISAIVEKCGNPGLLDKFMVPGLLFIDTPGHHAFTTLRSRGGALADLAVVIVDINEGFKPQTIESLNILQQHKTPFVVVANKIDKIHGWNPQKGAPFMTSYNKQSEHVRGSLDTKFYEVVGELYNHGFSSDRYDRVNDFQHNIGVIPISAITGEGIPDLLMVLLGLAQRFLESNLHYNAEGPGVGTVLEVKEERGLGTTLDLILYDGVLKKGDTIVVGCLGEPIQTKVRAVLKPRALSEINVEDKFKQVSKVTAAVGVKISAPHLDGALSGGSVRVATAETLDAVVEEVRNEIEDVQIDTDQSGITIKADTIGSLEALVNELKKEDIPIRKANVGDISNRDIMEAFAIEDPFHSVIVGFNVNILPDAKEKVRSTGVKVFMNDVIYRLIDDYRDWVKEQRAISEKAVSETIVKPAMFTIMPDCVFRQSKPAVVGVRVIGGTIKTKVDVATGDGTVVGIVKGLQSRGENVSVATIGMEVAMSIEGPTVGRQINEGDILHANIPERHVKILEQELYDSLSADELEALDSFLDIKRRDNPFWAK.

Residues 7-223 enclose the tr-type G domain; it reads LRTPIVCVMG…LLGLAQRFLE (217 aa). Positions 16–23 are G1; sequence GHVDHGKT. 16–23 contributes to the GTP binding site; the sequence is GHVDHGKT. Positions 41–45 are G2; sequence AITQH. The G3 stretch occupies residues 78–81; it reads DTPG. GTP is bound by residues 78 to 82 and 132 to 135; these read DTPGH and NKID. A G4 region spans residues 132–135; the sequence is NKID. Residues 200–202 form a G5 region; sequence SAI.

Belongs to the TRAFAC class translation factor GTPase superfamily. Classic translation factor GTPase family. IF-2 subfamily.

Functionally, function in general translation initiation by promoting the binding of the formylmethionine-tRNA to ribosomes. Seems to function along with eIF-2. The protein is Probable translation initiation factor IF-2 of Methanococcoides burtonii (strain DSM 6242 / NBRC 107633 / OCM 468 / ACE-M).